We begin with the raw amino-acid sequence, 917 residues long: MDYKETLLMPKTDFPMRGGLPNKEPQIQEKWDAEDQYHKALEKNKGNETFILHDGPPYANGNLHMGHALNKILKDFIVRYKTMQGFYAPYVPGWDTHGLPIEQALTKKGVDRKKMSTAEFREKCKEFALEQIELQKKDFRRLGVRGDFNDPYITLKPEYEAAQIRIFGEMADKGLIYKGKKPVYWSPSSESSLAEAEIEYHDKRSASIYVAFDVKDDKGVVDADAKFIIWTTTPWTIPSNVAITVHPELKYGQYNVNGEKYIIAEALSDAVAEALDWDKASIKLEKEYTGKELEYVVAQHPFLDRESLVINGDHVTTDAGTGCVHTAPGHGEDDYIVGQKYELPVISPIDDKGVFTEEGGQFEGMFYDKANKAVTDLLTEKGALLKLDFITHSYPHDWRTKKPVIFRATPQWFASISKVRQDILDAIENTNFKVNWGKTRIYNMVRDRGEWVISRQRVWGVPLPVFYAENGEIIMTKETVNHVADLFAEHGSNIWFEREAKDLLPEGFTHPGSPNGTFTKETDIMDVWFDSGSSHRGVLETRPELSFPADMYLEGSDQYRGWFNSSITTSVATRGVSPYKFLLSHGFVMDGEGKKMSKSLGNVIVPDQVVKQKGADIARLWVSSTDYLADVRISDEILKQTSDVYRKIRNTLRFMLGNINDFNPDTDSIPESELLEVDRYLLNRLREFTASTINNYENFDYLNIYQEVQNFINVELSNFYLDYGKDILYIEQRDSHIRRSMQTVLYQILVDMTKLLAPILVHTAEEVWSHTPHVKEESVHLADMPKVVEVDQALLDKWRTFMNLRDDVNRALETARNEKVIGKSLEAKVTIASNDKFNASEFLTSFDALHQLFIVSQVKVVDKLDDQATAYEHGDIVIEHADGEKCERCWNYSEDLGAVDELTHLCPRCQQVVKSLV.

A 'HIGH' region motif is present at residues 57 to 67 (PYANGNLHMGH). An L-isoleucyl-5'-AMP-binding site is contributed by Glu554. The 'KMSKS' region signature appears at 595–599 (KMSKS). Residue Lys598 coordinates ATP. Residues Cys886, Cys889, Cys906, and Cys909 each coordinate Zn(2+).

Belongs to the class-I aminoacyl-tRNA synthetase family. IleS type 1 subfamily. In terms of assembly, monomer. Zn(2+) is required as a cofactor.

Its subcellular location is the cytoplasm. The enzyme catalyses tRNA(Ile) + L-isoleucine + ATP = L-isoleucyl-tRNA(Ile) + AMP + diphosphate. Its function is as follows. Catalyzes the attachment of isoleucine to tRNA(Ile). As IleRS can inadvertently accommodate and process structurally similar amino acids such as valine, to avoid such errors it has two additional distinct tRNA(Ile)-dependent editing activities. One activity is designated as 'pretransfer' editing and involves the hydrolysis of activated Val-AMP. The other activity is designated 'posttransfer' editing and involves deacylation of mischarged Val-tRNA(Ile). The sequence is that of Isoleucine--tRNA ligase from Staphylococcus aureus (strain Mu3 / ATCC 700698).